The chain runs to 369 residues: MKAKRIVFKVGTSSLTNADGSLSRAKVKEITRQLALLHEAGHELILVSSGAIAAGFSSLGFKKRPTKVADKQASAAVGQGLLLEEYTTNLLLKQIISAQILLTQDDFADKRRYKNAHQALSVLLNRGAIPIINENDTVAIEELKVGDNDTLSAQVAAMVQADLLVLLTDVDGLYTANPSTNPDARRLEKIEKISSELIDMAGGAGTSNGTGGMLTKIKAATLATMSGVPVYICSSLKSDALLEAAEESKDGSLFLAQEKGLKTQKQWLAFYAKSQGEIYVDQGAADALRNNGKSLLVSGLVSVLGSFAYQDTVTVYEDGSGAILGKGRVRFGKSSLKDMLKSNKPKGVVIHRDDWISLTPELNDLFAEF.

Residue Lys-9 coordinates ATP. Ser-49, Asp-136, and Asn-148 together coordinate substrate. Residues 168-169 (TD) and 210-216 (TGGMLTK) each bind ATP. Positions 275-355 (QGEIYVDQGA…KGVVIHRDDW (81 aa)) constitute a PUA domain.

Belongs to the glutamate 5-kinase family.

It is found in the cytoplasm. It catalyses the reaction L-glutamate + ATP = L-glutamyl 5-phosphate + ADP. It participates in amino-acid biosynthesis; L-proline biosynthesis; L-glutamate 5-semialdehyde from L-glutamate: step 1/2. Functionally, catalyzes the transfer of a phosphate group to glutamate to form L-glutamate 5-phosphate. The sequence is that of Glutamate 5-kinase from Streptococcus sanguinis (strain SK36).